A 61-amino-acid chain; its full sequence is Insect toxin AaHIT5 (61 aa).

The LCN-type CS-alpha/beta domain occupies 1–61 (DGYIKRHDGC…AWKSETNTCD (61 aa)). Intrachain disulfides connect cysteine 10/cysteine 60, cysteine 14/cysteine 35, cysteine 21/cysteine 42, and cysteine 25/cysteine 44.

As to expression, expressed by the venom gland.

The protein resides in the secreted. Excitatory insect toxins induce a spastic paralysis. They bind voltage-independently to sodium channels (Nav) and shift the voltage of activation toward more negative potentials thereby affecting sodium channel activation and promoting spontaneous and repetitive firing. This toxin elicits excitatory activity with no flaccid paralysis despite its high degree of sequence similarity with other depressant insect toxins. This toxin is active only on insects. The protein is Insect toxin AaHIT5 of Androctonus australis (Sahara scorpion).